A 664-amino-acid chain; its full sequence is MSLSKHLQKLVHKRESKKQPNKKMPVSVSKLRRPRTSKKTETGNPEKTLKDPRTCCNNLFSIFSARSFLYRVPLTILFLFLIYLWSTSTTVISGNVVHICISSRKLTDLYCLTAGSQPALRAPVNNFTAPASEDVVTSKEEKNVFVLGKDGDKGFAENETFEGGKDSDKSTVGENLTINKNETFTGETSGERVSILNQDAKPIHEKNLDSVLDQDSLPKNEIDQDFIIDWDPETGEERYRYFKAKTEDEETGLKSTEEYIQIQRTWLSMGNNRKKPGSCEGKGVYVYDLPSKFNKDLLRECSDMVPWADFCNYFKNDAFGELMESMGKGWFRTHQYSLEPIFHSRILKHPCRVHNETQAKLFYVPFYGGMDVLRWHFKNVSSDVKDVLPIEIVKWLGSKKSWRKNSGKDHVFVLGKISWDFRRVDKYSWGSSLLEMQEMKNPTKLLIERNPWEVNDIAIPHPTYFHPKTDTDIAIWQNKILGKPRRSLISFAGAARPGNPESIRSILIDQCRSSPNQCRFLNCTDGGCDKSESVIELFRDSEFCLQPPGDSPTRKSIFDSLILGCIPVIFDPYSAYYQYTWHLPEDHRRYSVYINKEDVKLKRVNVIEKLMSKTLREREDMRSYIVHELLPGLVYGDSNAKFERFRDAFDITMDSLFKKIAKTV.

The segment covering 1–21 (MSLSKHLQKLVHKRESKKQPN) has biased composition (basic residues). The tract at residues 1-49 (MSLSKHLQKLVHKRESKKQPNKKMPVSVSKLRRPRTSKKTETGNPEKTL) is disordered. Topologically, residues 1–71 (MSLSKHLQKL…IFSARSFLYR (71 aa)) are cytoplasmic. A helical; Signal-anchor for type II membrane protein transmembrane segment spans residues 72–92 (VPLTILFLFLIYLWSTSTTVI). Residues 93–664 (SGNVVHICIS…SLFKKIAKTV (572 aa)) are Lumenal-facing. Residues N126, N158, N175, N181, N355, N379, and N522 are each glycosylated (N-linked (GlcNAc...) asparagine).

This sequence belongs to the glycosyltransferase 47 family. As to expression, root hair specific. Expressed in roots and young leaves.

The protein resides in the golgi apparatus membrane. In terms of biological role, xyloglucan-specific galacturonosyltransferase that forms the beta-D-galactosyluronic acid-(1-&gt;2)-alpha-D-xylosyl linkage. Required for root hair development probably by providing important acidic xyloglucans. The sequence is that of Xyloglucan-specific galacturonosyltransferase 1 from Arabidopsis thaliana (Mouse-ear cress).